Reading from the N-terminus, the 355-residue chain is Heterogeneous nuclear ribonucleoprotein D0 (355 aa).

The disordered stretch occupies residues Met-1 to Ala-92. At Ser-2 the chain carries N-acetylserine. Low complexity-rich tracts occupy residues Ala-11–Gly-20 and Glu-27–Gly-42. A compositionally biased stretch (gly residues) spans Ser-43–Gly-58. A compositionally biased stretch (basic and acidic residues) spans Glu-64 to Asn-73. Phosphoserine is present on Ser-71. Lys-72 is covalently cross-linked (Glycyl lysine isopeptide (Lys-Gly) (interchain with G-Cter in SUMO2)). Phosphoserine is present on residues Ser-80, Ser-82, and Ser-83. A Phosphothreonine modification is found at Thr-91. RRM domains lie at Trp-97 to Glu-179 and Lys-182 to Glu-261. An N6-methyllysine modification is found at Lys-119. The residue at position 127 (Thr-127) is a Phosphothreonine. A Glycyl lysine isopeptide (Lys-Gly) (interchain with G-Cter in SUMO2) cross-link involves residue Lys-129. N6-acetyllysine is present on Lys-165. Ser-190 carries the phosphoserine modification. Thr-193 carries the phosphothreonine modification. A Glycyl lysine isopeptide (Lys-Gly) (interchain with G-Cter in SUMO2) cross-link involves residue Lys-197. Residues Lys-243 and Lys-251 each carry the N6-acetyllysine modification. Tyr-263 carries the post-translational modification Omega-N-methylarginine. Ser-271 is modified (phosphoserine). An Omega-N-methylarginine modification is found at Arg-272. The residue at position 273 (Gly-273) is an N6-acetyllysine. Omega-N-methylarginine is present on residues Arg-278, Arg-280, and Arg-282. Gln-292 carries the N6-acetyllysine modification. An Asymmetric dimethylarginine; alternate modification is found at Arg-345. Arg-345 bears the Dimethylated arginine; alternate mark. At Arg-345 the chain carries Omega-N-methylarginine; alternate.

As to quaternary structure, identified in a IGF2BP1-dependent mRNP granule complex containing untranslated mRNAs. Part of a complex associated with the FOS mCRD domain and consisting of PABPC1, PAIP1, CSDE1/UNR and SYNCRIP. Interacts with IGF2BP2. Interacts with GTPBP1. Interacts with EIF4G1; the interaction requires RNA. Interacts with EIF3B and RPS3. In terms of processing, arg-345 is dimethylated, probably to asymmetric dimethylarginine. Post-translationally, methylated by PRMT1, in an insulin-dependent manner. The PRMT1-mediated methylation regulates tyrosine phosphorylation.

It is found in the nucleus. Its subcellular location is the cytoplasm. Binds with high affinity to RNA molecules that contain AU-rich elements (AREs) found within the 3'-UTR of many proto-oncogenes and cytokine mRNAs. Also binds to double- and single-stranded DNA sequences in a specific manner and functions a transcription factor. Each of the RNA-binding domains specifically can bind solely to a single-stranded non-monotonous 5'-UUAG-3' sequence and also weaker to the single-stranded 5'-TTAGGG-3' telomeric DNA repeat. Binds RNA oligonucleotides with 5'-UUAGGG-3' repeats more tightly than the telomeric single-stranded DNA 5'-TTAGGG-3' repeats. Binding of RRM1 to DNA inhibits the formation of DNA quadruplex structure which may play a role in telomere elongation. May be involved in translationally coupled mRNA turnover. Implicated with other RNA-binding proteins in the cytoplasmic deadenylation/translational and decay interplay of the FOS mRNA mediated by the major coding-region determinant of instability (mCRD) domain. May play a role in the regulation of the rhythmic expression of circadian clock core genes. Directly binds to the 3'UTR of CRY1 mRNA and induces CRY1 rhythmic translation. May also be involved in the regulation of PER2 translation. The polypeptide is Heterogeneous nuclear ribonucleoprotein D0 (HNRNPD) (Homo sapiens (Human)).